We begin with the raw amino-acid sequence, 434 residues long: Tryptophan--tRNA ligase (434 aa).

ATP is bound by residues T14 to S16 and G22 to N23. Positions T15–N23 match the 'HIGH' region motif. D147 is a binding site for L-tryptophan. ATP contacts are provided by residues G159–D161, L199, and K206–S210. The 'KMSKS' region signature appears at K206 to S210.

Belongs to the class-I aminoacyl-tRNA synthetase family. In terms of assembly, homodimer.

The protein localises to the cytoplasm. It catalyses the reaction tRNA(Trp) + L-tryptophan + ATP = L-tryptophyl-tRNA(Trp) + AMP + diphosphate + H(+). In terms of biological role, catalyzes the attachment of tryptophan to tRNA(Trp). This is Tryptophan--tRNA ligase from Xylella fastidiosa (strain 9a5c).